We begin with the raw amino-acid sequence, 289 residues long: Bis(5'-nucleosyl)-tetraphosphatase, symmetrical (289 aa).

This sequence belongs to the Ap4A hydrolase family.

The enzyme catalyses P(1),P(4)-bis(5'-adenosyl) tetraphosphate + H2O = 2 ADP + 2 H(+). Functionally, hydrolyzes diadenosine 5',5'''-P1,P4-tetraphosphate to yield ADP. This chain is Bis(5'-nucleosyl)-tetraphosphatase, symmetrical, found in Pseudomonas fluorescens (strain ATCC BAA-477 / NRRL B-23932 / Pf-5).